A 360-amino-acid chain; its full sequence is uncharacterized protein (360 aa).

The 232-residue stretch at 4 to 235 folds into the ABC transporter domain; that stretch reads LSLQHIQKIY…PANMFVSGFI (232 aa). 37-44 contacts ATP; the sequence is GPSGCGKS.

The protein belongs to the ABC transporter superfamily.

This is an uncharacterized protein from Escherichia coli (strain K12).